Here is a 427-residue protein sequence, read N- to C-terminus: Cysteate synthase (427 aa).

The residue at position 104 (lysine 104) is an N6-(pyridoxal phosphate)lysine. Residues asparagine 130 and threonine 382 each coordinate pyridoxal 5'-phosphate.

Belongs to the threonine synthase family. Cysteate synthase subfamily. As to quaternary structure, homotrimer. Pyridoxal 5'-phosphate is required as a cofactor.

It carries out the reaction O-phospho-L-serine + sulfite + H(+) = L-cysteate + phosphate. Its pathway is cofactor biosynthesis; coenzyme M biosynthesis. Its function is as follows. Specifically catalyzes the beta-elimination of phosphate from L-phosphoserine and the beta-addition of sulfite to the dehydroalanine intermediate to produce L-cysteate. The chain is Cysteate synthase from Methanocella paludicola (strain DSM 17711 / JCM 13418 / NBRC 101707 / SANAE).